The primary structure comprises 195 residues: MNAIDAVIDSFSRLPGIGHKSAARIAYHLLKQGPADALRLAEAVSTLHEKIHPCTICGSYTEDEICSICADETRDRATICVVGFPQDVNTISSIPEYRGLFHVLGGLIAPLEGIGPDQLHISELIRRIHEGGITEVILATNPTIEGDTTALYIQKILQDLPVNITRLASGLPVGGDLEYADRLTLARSLNGRIKF.

The segment at cysteine 54–cysteine 69 adopts a C4-type zinc-finger fold. Positions alanine 77–proline 172 constitute a Toprim domain.

Belongs to the RecR family.

In terms of biological role, may play a role in DNA repair. It seems to be involved in an RecBC-independent recombinational process of DNA repair. It may act with RecF and RecO. The chain is Recombination protein RecR from Treponema denticola (strain ATCC 35405 / DSM 14222 / CIP 103919 / JCM 8153 / KCTC 15104).